A 295-amino-acid polypeptide reads, in one-letter code: 4-hydroxy-tetrahydrodipicolinate synthase (295 aa).

A pyruvate-binding site is contributed by T47. Y135 functions as the Proton donor/acceptor in the catalytic mechanism. The Schiff-base intermediate with substrate role is filled by K163. I206 serves as a coordination point for pyruvate.

The protein belongs to the DapA family. In terms of assembly, homodimer.

It is found in the cytoplasm. The enzyme catalyses L-aspartate 4-semialdehyde + pyruvate = (2S,4S)-4-hydroxy-2,3,4,5-tetrahydrodipicolinate + H2O + H(+). It functions in the pathway amino-acid biosynthesis; L-lysine biosynthesis via DAP pathway; (S)-tetrahydrodipicolinate from L-aspartate: step 3/4. Its function is as follows. Catalyzes the condensation of (S)-aspartate-beta-semialdehyde [(S)-ASA] and pyruvate to 4-hydroxy-tetrahydrodipicolinate (HTPA). The protein is 4-hydroxy-tetrahydrodipicolinate synthase of Staphylococcus aureus (strain MSSA476).